Consider the following 78-residue polypeptide: Acyl carrier protein (78 aa).

A Carrier domain is found at 2-77; that stretch reads SDTAERVKKI…DAVKFIDKAS (76 aa). Ser-37 carries the post-translational modification O-(pantetheine 4'-phosphoryl)serine.

The protein belongs to the acyl carrier protein (ACP) family. Post-translationally, 4'-phosphopantetheine is transferred from CoA to a specific serine of apo-ACP by AcpS. This modification is essential for activity because fatty acids are bound in thioester linkage to the sulfhydryl of the prosthetic group.

The protein resides in the cytoplasm. It participates in lipid metabolism; fatty acid biosynthesis. In terms of biological role, carrier of the growing fatty acid chain in fatty acid biosynthesis. In Brucella abortus (strain S19), this protein is Acyl carrier protein.